The sequence spans 246 residues: Polyhedrin (246 aa).

Belongs to the polyhedrin family.

Major component of the virus occlusion bodies, which are large proteinaceous structures (polyhedra), that protect the virus from the outside environment for extended periods until they are ingested by insect larvae. The polypeptide is Polyhedrin (PH) (Heliothis zea nuclear polyhedrosis virus (HzSNPV)).